The chain runs to 253 residues: Pupal cuticle protein (253 aa).

An N-terminal signal peptide occupies residues 1–18 (MKSMIVVACLALACGAHA). Over residues 54 to 66 (LQQASKNNPNPND) the composition is skewed to polar residues. Positions 54–74 (LQQASKNNPNPNDDGSYDPRW) are disordered. 3 tandem repeats follow at residues 97 to 100 (AAPA), 115 to 118 (AAPA), and 154 to 157 (AAPA). Over residues 155–167 (APAQQQWNAPAHQ) the composition is skewed to low complexity. Disordered stretches follow at residues 155 to 178 (APAQQQWNAPAHQDWNAPAHQDWN) and 187 to 206 (APAHQSWNGAPSWQSGAPAH). The segment covering 189-201 (AHQSWNGAPSWQS) has biased composition (polar residues).

Functionally, component of the cuticle of the pupae of silk moth. The protein is Pupal cuticle protein (PCP) of Bombyx mori (Silk moth).